The sequence spans 300 residues: UDP-3-O-acyl-N-acetylglucosamine deacetylase (300 aa).

Residues histidine 78, histidine 237, and aspartate 241 each contribute to the Zn(2+) site. Catalysis depends on histidine 264, which acts as the Proton donor.

This sequence belongs to the LpxC family. The cofactor is Zn(2+).

The enzyme catalyses a UDP-3-O-[(3R)-3-hydroxyacyl]-N-acetyl-alpha-D-glucosamine + H2O = a UDP-3-O-[(3R)-3-hydroxyacyl]-alpha-D-glucosamine + acetate. The protein operates within glycolipid biosynthesis; lipid IV(A) biosynthesis; lipid IV(A) from (3R)-3-hydroxytetradecanoyl-[acyl-carrier-protein] and UDP-N-acetyl-alpha-D-glucosamine: step 2/6. Its function is as follows. Catalyzes the hydrolysis of UDP-3-O-myristoyl-N-acetylglucosamine to form UDP-3-O-myristoylglucosamine and acetate, the committed step in lipid A biosynthesis. The sequence is that of UDP-3-O-acyl-N-acetylglucosamine deacetylase from Acinetobacter baumannii (strain SDF).